The primary structure comprises 240 residues: MSEEEKPKPKLSPALAAKMAAMKKKQEGGEEAAASQEGGEKPKAKLSPMMAARMAAKKSGDASPAPDKPKAEPVDENRDPEPHEMAYRVIKEKFGDAVSDLDNNPLMPFFTVENVDAWQAIAFFMREDERLRFDYMACLSGVDYGDGRLGVVYNFDALATHKHKLTVKVFCSKEDPRIPSVAEIWLTADWHEREAYDMYGIVFEGHPDMRRILCPDDWDGYPLRKDYKVQEVYHGIKVPY.

A disordered region spans residues 1-82 (MSEEEKPKPK…PVDENRDPEP (82 aa)). The span at 11 to 20 (LSPALAAKMA) shows a compositional bias: low complexity. Residues 67-82 (DKPKAEPVDENRDPEP) are compositionally biased toward basic and acidic residues.

This sequence belongs to the complex I 30 kDa subunit family. In terms of assembly, NDH-1 is composed of 14 different subunits. Subunits NuoB, C, D, E, F, and G constitute the peripheral sector of the complex.

It localises to the cell inner membrane. The enzyme catalyses a quinone + NADH + 5 H(+)(in) = a quinol + NAD(+) + 4 H(+)(out). Its function is as follows. NDH-1 shuttles electrons from NADH, via FMN and iron-sulfur (Fe-S) centers, to quinones in the respiratory chain. The immediate electron acceptor for the enzyme in this species is believed to be a menaquinone. Couples the redox reaction to proton translocation (for every two electrons transferred, four hydrogen ions are translocated across the cytoplasmic membrane), and thus conserves the redox energy in a proton gradient. The chain is NADH-quinone oxidoreductase subunit C from Chloroherpeton thalassium (strain ATCC 35110 / GB-78).